The primary structure comprises 429 residues: Glutamate-1-semialdehyde 2,1-aminomutase 2 (429 aa).

Residue Lys268 is modified to N6-(pyridoxal phosphate)lysine.

Belongs to the class-III pyridoxal-phosphate-dependent aminotransferase family. HemL subfamily. In terms of assembly, homodimer. Requires pyridoxal 5'-phosphate as cofactor.

Its subcellular location is the cytoplasm. It carries out the reaction (S)-4-amino-5-oxopentanoate = 5-aminolevulinate. It functions in the pathway porphyrin-containing compound metabolism; protoporphyrin-IX biosynthesis; 5-aminolevulinate from L-glutamyl-tRNA(Glu): step 2/2. The sequence is that of Glutamate-1-semialdehyde 2,1-aminomutase 2 from Bacillus thuringiensis (strain Al Hakam).